A 145-amino-acid polypeptide reads, in one-letter code: 3-dehydroquinate dehydratase (145 aa).

The active-site Proton acceptor is Tyr-22. The substrate site is built by Asn-73, His-79, and Asp-86. His-99 serves as the catalytic Proton donor. Substrate contacts are provided by residues 100–101 and Arg-110; that span reads LS.

It belongs to the type-II 3-dehydroquinase family. As to quaternary structure, homododecamer.

The enzyme catalyses 3-dehydroquinate = 3-dehydroshikimate + H2O. Its pathway is metabolic intermediate biosynthesis; chorismate biosynthesis; chorismate from D-erythrose 4-phosphate and phosphoenolpyruvate: step 3/7. Its function is as follows. Catalyzes a trans-dehydration via an enolate intermediate. This is 3-dehydroquinate dehydratase from Prochlorococcus marinus (strain NATL1A).